A 110-amino-acid chain; its full sequence is Large ribosomal subunit protein uL22 (110 aa).

This sequence belongs to the universal ribosomal protein uL22 family. Part of the 50S ribosomal subunit.

Functionally, this protein binds specifically to 23S rRNA; its binding is stimulated by other ribosomal proteins, e.g. L4, L17, and L20. It is important during the early stages of 50S assembly. It makes multiple contacts with different domains of the 23S rRNA in the assembled 50S subunit and ribosome. Its function is as follows. The globular domain of the protein is located near the polypeptide exit tunnel on the outside of the subunit, while an extended beta-hairpin is found that lines the wall of the exit tunnel in the center of the 70S ribosome. The sequence is that of Large ribosomal subunit protein uL22 from Teredinibacter turnerae (strain ATCC 39867 / T7901).